We begin with the raw amino-acid sequence, 138 residues long: Basic phospholipase A2 RV-4 (138 aa).

The first 16 residues, 1–16 (MRTLWIVAVCLIGVEG), serve as a signal peptide directing secretion. 7 disulfide bridges follow: Cys42/Cys131, Cys44/Cys60, Cys59/Cys111, Cys65/Cys138, Cys66/Cys104, Cys73/Cys97, and Cys91/Cys102. Residues Tyr43, Gly45, and Gly47 each coordinate Ca(2+). His63 is a catalytic residue. Ca(2+) is bound at residue Asp64. Asp105 is an active-site residue.

It belongs to the phospholipase A2 family. Group II subfamily. D49 sub-subfamily. In terms of assembly, heterodimer of a weakly toxic basic protein having phospholipase A2 activity (RV-4) and a non-toxic acidic protein which inhibits its enzymatic activity but potentiates its lethal potency and neurotoxicity (RV-7). The cofactor is Ca(2+). As to expression, expressed by the venom gland.

The protein resides in the secreted. The enzyme catalyses a 1,2-diacyl-sn-glycero-3-phosphocholine + H2O = a 1-acyl-sn-glycero-3-phosphocholine + a fatty acid + H(+). In terms of biological role, heterodimer RV-4/RV-7: acts as a presynaptic neurotoxin. Its function is as follows. Monomer: snake venom phospholipase A2 (PLA2) that acts as a presynaptic neurotoxin. PLA2 catalyzes the calcium-dependent hydrolysis of the 2-acyl groups in 3-sn-phosphoglycerides. This Daboia siamensis (Eastern Russel's viper) protein is Basic phospholipase A2 RV-4.